The sequence spans 183 residues: Photosystem I assembly protein Ycf4 (183 aa).

Helical transmembrane passes span 23–43 (WASV…SSYF) and 64–84 (VMSF…LTII).

It belongs to the Ycf4 family.

The protein localises to the plastid. The protein resides in the chloroplast thylakoid membrane. Functionally, seems to be required for the assembly of the photosystem I complex. This chain is Photosystem I assembly protein Ycf4, found in Stigeoclonium helveticum (Green alga).